The following is a 360-amino-acid chain: Putative transcription factor A494R (360 aa).

Residues 153-175 fold into a zinc finger; sequence CTCGGQMELWVNSTQSDLVCNEC.

The protein belongs to the nucleo-cytoplasmic large DNA viruses (NCLDVs) VLTF-3 family.

Functionally, putative transcription factor. The protein is Putative transcription factor A494R of Paramecium bursaria Chlorella virus 1 (PBCV-1).